The sequence spans 416 residues: Probable glucan 1,3-beta-glucosidase A (416 aa).

The signal sequence occupies residues 1–22 (MIFKFSQKALVALYLVVGLAEA). Glutamate 211 acts as the Proton donor in catalysis. Cystine bridges form between cysteine 291-cysteine 415 and cysteine 316-cysteine 342. Glutamate 308 acts as the Nucleophile in catalysis. Asparagine 344 carries N-linked (GlcNAc...) asparagine glycosylation.

This sequence belongs to the glycosyl hydrolase 5 (cellulase A) family. In terms of assembly, monomer. It depends on Mn(2+) as a cofactor.

The protein resides in the secreted. The catalysed reaction is Successive hydrolysis of beta-D-glucose units from the non-reducing ends of (1-&gt;3)-beta-D-glucans, releasing alpha-glucose.. In terms of biological role, beta-glucanases participate in the metabolism of beta-glucan, the main structural component of the cell wall. It could also function biosynthetically as a transglycosylase. The protein is Probable glucan 1,3-beta-glucosidase A (exgA) of Aspergillus fumigatus (strain CBS 144.89 / FGSC A1163 / CEA10) (Neosartorya fumigata).